A 769-amino-acid polypeptide reads, in one-letter code: Spastin (769 aa).

A disordered region spans residues 1 to 100 (MVRTKNQSSS…TSGNVPRGGQ (100 aa)). The Cytoplasmic portion of the chain corresponds to 1 to 113 (MVRTKNQSSS…KQNLYVVSFP (113 aa)). A required for localization to punctate cytoplasmic foci region spans residues 1 to 201 (MVRTKNQSSS…QTLEMAASRG (201 aa)). Low complexity predominate over residues 8–19 (SSSSSASSSTKS). Residues 24–33 (SGGGGGGGGS) show a composition bias toward gly residues. Positions 54 to 63 (SSKLSSNRQR) are enriched in polar residues. The segment covering 64–78 (TTTTITTTTTTPGSS) has biased composition (low complexity). The helical intramembrane region spans 114-134 (IIFLFNVLRSLIYQLFCIFRY). Residues 135 to 769 (LYGASTKVIY…WSQDYGDITI (635 aa)) lie on the Cytoplasmic side of the membrane. Positions 199 to 769 (SRGGTGAGGY…WSQDYGDITI (571 aa)) are sufficient for interaction with microtubules and microtubule severing. The MIT domain maps to 224–299 (HRRAFEYISK…SMARDRLHFL (76 aa)). The tract at residues 314-462 (KEQPKKQLPH…NAASGSGSGA (149 aa)) is disordered. Over residues 334–344 (TTTSSGSSSSS) the composition is skewed to low complexity. Polar residues-rich tracts occupy residues 395-413 (NKSQ…STSV) and 434-450 (QFSS…RTPI). A compositionally biased stretch (low complexity) spans 451-462 (NNNAASGSGSGA). Positions 452–466 (NNAASGSGSGASTPL) are required for interaction with microtubules. 534 to 541 (GPPGNGKT) lines the ATP pocket.

It belongs to the AAA ATPase family. Spastin subfamily. In terms of assembly, homohexamer. The homohexamer is stabilized by ATP-binding. The homohexamer may adopt a ring conformation through which microtubules pass prior to being severed. Interacts with microtubules. Interacts with atl; may be involved in microtubule dynamics.

It localises to the membrane. It is found in the cytoplasm. Its subcellular location is the cytoskeleton. The protein resides in the microtubule organizing center. The protein localises to the centrosome. It localises to the chromosome. It is found in the lipid droplet. It catalyses the reaction n ATP + n H2O + a microtubule = n ADP + n phosphate + (n+1) alpha/beta tubulin heterodimers.. In terms of biological role, ATP-dependent microtubule severing protein. Stimulates microtubule minus-end depolymerization and poleward microtubule flux in the mitotic spindle. Regulates microtubule stability in the neuromuscular junction synapse. Involved in lipid metabolism by regulating the size and distribution of lipid droplets. Involved in axon regeneration by regulating microtubule severing. The polypeptide is Spastin (Drosophila virilis (Fruit fly)).